Consider the following 963-residue polypeptide: Bifunctional glutamine synthetase adenylyltransferase/adenylyl-removing enzyme (963 aa).

Positions 1 to 453 (MLTTLIPLSQ…IFNEIIGEEE (453 aa)) are adenylyl removase. Positions 461–963 (VNEKLAEWKD…VREMWQRLLA (503 aa)) are adenylyl transferase.

The protein belongs to the GlnE family. Mg(2+) serves as cofactor.

It carries out the reaction [glutamine synthetase]-O(4)-(5'-adenylyl)-L-tyrosine + phosphate = [glutamine synthetase]-L-tyrosine + ADP. The enzyme catalyses [glutamine synthetase]-L-tyrosine + ATP = [glutamine synthetase]-O(4)-(5'-adenylyl)-L-tyrosine + diphosphate. Its function is as follows. Involved in the regulation of glutamine synthetase GlnA, a key enzyme in the process to assimilate ammonia. When cellular nitrogen levels are high, the C-terminal adenylyl transferase (AT) inactivates GlnA by covalent transfer of an adenylyl group from ATP to specific tyrosine residue of GlnA, thus reducing its activity. Conversely, when nitrogen levels are low, the N-terminal adenylyl removase (AR) activates GlnA by removing the adenylyl group by phosphorolysis, increasing its activity. The regulatory region of GlnE binds the signal transduction protein PII (GlnB) which indicates the nitrogen status of the cell. The chain is Bifunctional glutamine synthetase adenylyltransferase/adenylyl-removing enzyme from Mannheimia haemolytica (Pasteurella haemolytica).